The chain runs to 336 residues: Dihydroorotate dehydrogenase (quinone) (336 aa).

FMN is bound by residues 62 to 66 (AGLDK) and threonine 86. Position 66 (lysine 66) interacts with substrate. 111 to 115 (NRMGF) serves as a coordination point for substrate. 2 residues coordinate FMN: asparagine 139 and asparagine 172. A substrate-binding site is contributed by asparagine 172. Serine 175 acts as the Nucleophile in catalysis. Asparagine 177 provides a ligand contact to substrate. 2 residues coordinate FMN: lysine 217 and threonine 245. 246 to 247 (NT) contributes to the substrate binding site. FMN is bound by residues glycine 268, glycine 297, and 318 to 319 (YS).

The protein belongs to the dihydroorotate dehydrogenase family. Type 2 subfamily. As to quaternary structure, monomer. FMN serves as cofactor.

Its subcellular location is the cell membrane. The enzyme catalyses (S)-dihydroorotate + a quinone = orotate + a quinol. The protein operates within pyrimidine metabolism; UMP biosynthesis via de novo pathway; orotate from (S)-dihydroorotate (quinone route): step 1/1. Its function is as follows. Catalyzes the conversion of dihydroorotate to orotate with quinone as electron acceptor. The protein is Dihydroorotate dehydrogenase (quinone) of Citrobacter koseri (strain ATCC BAA-895 / CDC 4225-83 / SGSC4696).